A 518-amino-acid chain; its full sequence is 12S seed storage globulin 2 (518 aa).

Residues 1–24 (MATTRFPSLLFYSYIFLLCNGSMA) form the signal peptide. 2 cysteine pairs are disulfide-bonded: cysteine 45-cysteine 78 and cysteine 121-cysteine 324. The Cupin type-1 1 domain maps to 50-240 (LQAFEPLRQV…ALGISQQVAQ (191 aa)). The tract at residues 280–311 (IQSQEEQSTQYQVGQSPQYQEGQSTQYQPGQS) is disordered. Residues 330–479 (QNIENPKRAD…AYRISRQEAQ (150 aa)) enclose the Cupin type-1 2 domain. The segment at 482 to 518 (KNNRGEEFDAFTPKFTQTGSQSYQDEGESSSTEKASE) is disordered. Residues 495–518 (KFTQTGSQSYQDEGESSSTEKASE) are compositionally biased toward polar residues.

Belongs to the 11S seed storage protein (globulins) family. Hexamer; each subunit is composed of an acidic and a basic chain derived from a single precursor and linked by a disulfide bond.

This is a seed storage protein. The polypeptide is 12S seed storage globulin 2 (Avena sativa (Oat)).